The following is a 295-amino-acid chain: Pyridoxal 5'-phosphate synthase subunit PdxS (295 aa).

D-ribose 5-phosphate is bound at residue Asp-25. Lys-82 serves as the catalytic Schiff-base intermediate with D-ribose 5-phosphate. Gly-154 provides a ligand contact to D-ribose 5-phosphate. D-glyceraldehyde 3-phosphate is bound at residue Arg-166. D-ribose 5-phosphate is bound by residues Gly-215 and 236 to 237 (GS).

Belongs to the PdxS/SNZ family. In terms of assembly, in the presence of PdxT, forms a dodecamer of heterodimers.

It carries out the reaction aldehydo-D-ribose 5-phosphate + D-glyceraldehyde 3-phosphate + L-glutamine = pyridoxal 5'-phosphate + L-glutamate + phosphate + 3 H2O + H(+). It functions in the pathway cofactor biosynthesis; pyridoxal 5'-phosphate biosynthesis. Catalyzes the formation of pyridoxal 5'-phosphate from ribose 5-phosphate (RBP), glyceraldehyde 3-phosphate (G3P) and ammonia. The ammonia is provided by the PdxT subunit. Can also use ribulose 5-phosphate and dihydroxyacetone phosphate as substrates, resulting from enzyme-catalyzed isomerization of RBP and G3P, respectively. This is Pyridoxal 5'-phosphate synthase subunit PdxS from Actinobacillus pleuropneumoniae serotype 3 (strain JL03).